Consider the following 616-residue polypeptide: Alpha terpineol synthase, chloroplastic (616 aa).

A chloroplast-targeting transit peptide spans 1 to 41 (MALLSVAPLQKPLTSCSPFSTTMPTLGVCTPRKVVTPSIIM). Mg(2+) contacts are provided by Asp-367, Asp-371, and Asp-519. The DDXXD motif motif lies at 367 to 371 (DDIYD).

The protein belongs to the terpene synthase family. Tpsd subfamily. Mg(2+) is required as a cofactor. The cofactor is Mn(2+).

The protein localises to the plastid. It localises to the chloroplast. The catalysed reaction is (2E)-geranyl diphosphate + H2O = (S)-alpha-terpineol + diphosphate. The enzyme catalyses (2E)-geranyl diphosphate + H2O = 1,8-cineole + diphosphate. It catalyses the reaction (2E)-geranyl diphosphate = beta-myrcene + diphosphate. It carries out the reaction (2E)-geranyl diphosphate = (1S,5S)-sabinene + diphosphate. It participates in terpene metabolism; oleoresin biosynthesis. It functions in the pathway secondary metabolite biosynthesis; terpenoid biosynthesis. Its function is as follows. Monoterpene synthase (TPS) involved in the biosynthesis of monoterpene natural products included in conifer oleoresin secretions and volatile emissions; these compounds contribute to biotic and abiotic stress defense against herbivores and pathogens. Catalyzes the conversion of (2E)-geranyl diphosphate (GPP) to alpha-terpineol and, to a lower extent, to 1,8-cineole, myrcene and (-)-sabinene. This is Alpha terpineol synthase, chloroplastic from Pinus contorta (Shore pine).